Reading from the N-terminus, the 213-residue chain is LexA repressor (213 aa).

Positions 29–49 (VREICNAVGFKSTSTVHSYLE) form a DNA-binding region, H-T-H motif. Residues S136 and K173 each act as for autocatalytic cleavage activity in the active site.

This sequence belongs to the peptidase S24 family. In terms of assembly, homodimer.

The enzyme catalyses Hydrolysis of Ala-|-Gly bond in repressor LexA.. Its function is as follows. Represses a number of genes involved in the response to DNA damage (SOS response), including recA and lexA. In the presence of single-stranded DNA, RecA interacts with LexA causing an autocatalytic cleavage which disrupts the DNA-binding part of LexA, leading to derepression of the SOS regulon and eventually DNA repair. This Acetivibrio thermocellus (strain ATCC 27405 / DSM 1237 / JCM 9322 / NBRC 103400 / NCIMB 10682 / NRRL B-4536 / VPI 7372) (Clostridium thermocellum) protein is LexA repressor.